The chain runs to 285 residues: tRNA uridine(34) hydroxylase (285 aa).

The region spanning 130–225 is the Rhodanese domain; that stretch reads RGDDVVFFDG…YGEAFGDTGL (96 aa). Cysteine 185 serves as the catalytic Cysteine persulfide intermediate.

Belongs to the TrhO family.

It carries out the reaction uridine(34) in tRNA + AH2 + O2 = 5-hydroxyuridine(34) in tRNA + A + H2O. Its function is as follows. Catalyzes oxygen-dependent 5-hydroxyuridine (ho5U) modification at position 34 in tRNAs. The chain is tRNA uridine(34) hydroxylase from Rhodococcus jostii (strain RHA1).